Here is a 325-residue protein sequence, read N- to C-terminus: Pyruvate dehydrogenase E1 component subunit beta (325 aa).

Thiamine diphosphate is bound at residue Glu-60.

Heterodimer of an alpha and a beta chain. Thiamine diphosphate is required as a cofactor.

The catalysed reaction is N(6)-[(R)-lipoyl]-L-lysyl-[protein] + pyruvate + H(+) = N(6)-[(R)-S(8)-acetyldihydrolipoyl]-L-lysyl-[protein] + CO2. In terms of biological role, the pyruvate dehydrogenase complex catalyzes the overall conversion of pyruvate to acetyl-CoA and CO(2). It contains multiple copies of three enzymatic components: pyruvate dehydrogenase (E1), dihydrolipoamide acetyltransferase (E2) and lipoamide dehydrogenase (E3). This chain is Pyruvate dehydrogenase E1 component subunit beta (pdhB), found in Staphylococcus epidermidis (strain ATCC 35984 / DSM 28319 / BCRC 17069 / CCUG 31568 / BM 3577 / RP62A).